Consider the following 269-residue polypeptide: GTP cyclohydrolase FolE2 (269 aa).

This sequence belongs to the GTP cyclohydrolase IV family.

The catalysed reaction is GTP + H2O = 7,8-dihydroneopterin 3'-triphosphate + formate + H(+). It participates in cofactor biosynthesis; 7,8-dihydroneopterin triphosphate biosynthesis; 7,8-dihydroneopterin triphosphate from GTP: step 1/1. Converts GTP to 7,8-dihydroneopterin triphosphate. This chain is GTP cyclohydrolase FolE2, found in Burkholderia vietnamiensis (strain G4 / LMG 22486) (Burkholderia cepacia (strain R1808)).